The chain runs to 433 residues: Tol-Pal system protein TolB (433 aa).

An N-terminal signal peptide occupies residues 1–21 (MRNLLRGMLVVICCMAGIAAA).

It belongs to the TolB family. As to quaternary structure, the Tol-Pal system is composed of five core proteins: the inner membrane proteins TolA, TolQ and TolR, the periplasmic protein TolB and the outer membrane protein Pal. They form a network linking the inner and outer membranes and the peptidoglycan layer.

The protein localises to the periplasm. Part of the Tol-Pal system, which plays a role in outer membrane invagination during cell division and is important for maintaining outer membrane integrity. This Pseudomonas fluorescens (strain ATCC BAA-477 / NRRL B-23932 / Pf-5) protein is Tol-Pal system protein TolB.